Consider the following 104-residue polypeptide: NADH-quinone oxidoreductase subunit K (104 aa).

The next 3 helical transmembrane spans lie at 4-24 (VPASAYLTLAIILFCIGLFGA), 31-51 (VIVLVCIELMLNAVNLNLVAF), and 67-87 (LFTMAVAAAEAAVGLAILIAL).

It belongs to the complex I subunit 4L family. As to quaternary structure, NDH-1 is composed of 14 different subunits. Subunits NuoA, H, J, K, L, M, N constitute the membrane sector of the complex.

The protein resides in the cell membrane. It catalyses the reaction a quinone + NADH + 5 H(+)(in) = a quinol + NAD(+) + 4 H(+)(out). NDH-1 shuttles electrons from NADH, via FMN and iron-sulfur (Fe-S) centers, to quinones in the respiratory chain. The immediate electron acceptor for the enzyme in this species is believed to be a menaquinone. Couples the redox reaction to proton translocation (for every two electrons transferred, four hydrogen ions are translocated across the cytoplasmic membrane), and thus conserves the redox energy in a proton gradient. The chain is NADH-quinone oxidoreductase subunit K from Bacillus cereus (strain AH187).